Here is an 809-residue protein sequence, read N- to C-terminus: Trimethylamine-N-oxide reductase 2 (809 aa).

Positions Met-1 to Ala-31 form a signal peptide, tat-type signal. Residue Ser-176 participates in Mo-bis(molybdopterin guanine dinucleotide) binding.

Belongs to the prokaryotic molybdopterin-containing oxidoreductase family. It depends on Mo-bis(molybdopterin guanine dinucleotide) as a cofactor. Predicted to be exported by the Tat system. The position of the signal peptide cleavage has not been experimentally proven.

It is found in the periplasm. The enzyme catalyses trimethylamine + 2 Fe(III)-[cytochrome c] + H2O = trimethylamine N-oxide + 2 Fe(II)-[cytochrome c] + 3 H(+). In terms of biological role, reduces trimethylamine-N-oxide (TMAO) into trimethylamine; an anaerobic reaction coupled to energy-yielding reactions. Can also reduce other N- and S-oxide compounds such as 4-methylmorpholine-N-oxide and biotin sulfoxide (BSO), but with a lower catalytic efficiency. This is Trimethylamine-N-oxide reductase 2 (torZ) from Escherichia coli O6:H1 (strain CFT073 / ATCC 700928 / UPEC).